A 493-amino-acid chain; its full sequence is Glutamate--tRNA ligase (493 aa).

A 'HIGH' region motif is present at residues P10 to T20. Positions 107, 109, 134, and 136 each coordinate Zn(2+). The 'KMSKS' region signature appears at K251–R255. K254 is an ATP binding site.

Belongs to the class-I aminoacyl-tRNA synthetase family. Glutamate--tRNA ligase type 1 subfamily. In terms of assembly, monomer. It depends on Zn(2+) as a cofactor.

Its subcellular location is the cytoplasm. The enzyme catalyses tRNA(Glu) + L-glutamate + ATP = L-glutamyl-tRNA(Glu) + AMP + diphosphate. In terms of biological role, catalyzes the attachment of glutamate to tRNA(Glu) in a two-step reaction: glutamate is first activated by ATP to form Glu-AMP and then transferred to the acceptor end of tRNA(Glu). This Stutzerimonas stutzeri (strain A1501) (Pseudomonas stutzeri) protein is Glutamate--tRNA ligase.